Here is a 163-residue protein sequence, read N- to C-terminus: Protein MATERNALLY EXPRESSED GENE 5 (163 aa).

Positions 38 to 117 constitute an RRM domain; it reads STLYIEGLPA…DDVNVSAPAE (80 aa). 2 cysteine pairs are disulfide-bonded: C140/C162 and C143/C151.

The protein belongs to the MEG family. Ubiquitous.

The polypeptide is Protein MATERNALLY EXPRESSED GENE 5 (MEG5) (Zea mays (Maize)).